Reading from the N-terminus, the 140-residue chain is UPF0134 protein MPN_130 (140 aa).

The protein belongs to the UPF0134 family.

The sequence is that of UPF0134 protein MPN_130 from Mycoplasma pneumoniae (strain ATCC 29342 / M129 / Subtype 1) (Mycoplasmoides pneumoniae).